Here is a 495-residue protein sequence, read N- to C-terminus: UDP-glycosyltransferase 73E1 (495 aa).

Residues Ser299, 355 to 356 (WA), 373 to 381 (HCGWNSTIE), and 395 to 398 (FADQ) contribute to the UDP-alpha-D-glucose site.

The protein belongs to the UDP-glycosyltransferase family.

Functionally, may glycosylate diterpenes or flavonols in leaves. In Stevia rebaudiana (Stevia), this protein is UDP-glycosyltransferase 73E1.